The following is a 152-amino-acid chain: Superoxide dismutase [Cu-Zn] 4A (152 aa).

Cu cation is bound by residues His-45, His-47, and His-62. Cys-56 and Cys-145 form a disulfide bridge. Zn(2+) is bound by residues His-62, His-70, His-79, and Asp-82. His-119 is a Cu cation binding site.

This sequence belongs to the Cu-Zn superoxide dismutase family. In terms of assembly, homodimer. It depends on Cu cation as a cofactor. The cofactor is Zn(2+).

It is found in the cytoplasm. It carries out the reaction 2 superoxide + 2 H(+) = H2O2 + O2. Its function is as follows. Destroys radicals which are normally produced within the cells and which are toxic to biological systems. The chain is Superoxide dismutase [Cu-Zn] 4A (SODCC.3) from Zea mays (Maize).